The primary structure comprises 591 residues: Potassium-transporting ATPase potassium-binding subunit (591 aa).

10 consecutive transmembrane segments (helical) span residues 6-26 (WFQI…LGVF), 63-83 (WTEY…MLYI), 137-157 (GLAY…IAFI), 179-199 (VLWV…SQGV), 272-292 (LSNL…TYTL), 303-323 (WAVW…VYWA), 405-425 (AGMY…GLMV), 444-464 (AMLV…ISSV), 510-530 (VAIG…MLAI), and 553-573 (LFSV…FFPA).

It belongs to the KdpA family. As to quaternary structure, the system is composed of three essential subunits: KdpA, KdpB and KdpC.

Its subcellular location is the cell inner membrane. Functionally, part of the high-affinity ATP-driven potassium transport (or Kdp) system, which catalyzes the hydrolysis of ATP coupled with the electrogenic transport of potassium into the cytoplasm. This subunit binds the periplasmic potassium ions and delivers the ions to the membrane domain of KdpB through an intramembrane tunnel. The polypeptide is Potassium-transporting ATPase potassium-binding subunit (Koribacter versatilis (strain Ellin345)).